We begin with the raw amino-acid sequence, 620 residues long: Chaperone protein HscA homolog (620 aa).

It belongs to the heat shock protein 70 family.

Functionally, chaperone involved in the maturation of iron-sulfur cluster-containing proteins. Has a low intrinsic ATPase activity which is markedly stimulated by HscB. The sequence is that of Chaperone protein HscA homolog from Herminiimonas arsenicoxydans.